We begin with the raw amino-acid sequence, 1377 residues long: DNA-directed RNA polymerase subunit beta' (1377 aa).

Residues cysteine 60, cysteine 62, cysteine 75, and cysteine 78 each contribute to the Zn(2+) site. Mg(2+)-binding residues include aspartate 449, aspartate 451, and aspartate 453. Residues cysteine 777, cysteine 851, cysteine 858, and cysteine 861 each contribute to the Zn(2+) site.

The protein belongs to the RNA polymerase beta' chain family. In terms of assembly, the RNAP catalytic core consists of 2 alpha, 1 beta, 1 beta' and 1 omega subunit. When a sigma factor is associated with the core the holoenzyme is formed, which can initiate transcription. The cofactor is Mg(2+). It depends on Zn(2+) as a cofactor.

It catalyses the reaction RNA(n) + a ribonucleoside 5'-triphosphate = RNA(n+1) + diphosphate. In terms of biological role, DNA-dependent RNA polymerase catalyzes the transcription of DNA into RNA using the four ribonucleoside triphosphates as substrates. This is DNA-directed RNA polymerase subunit beta' from Borreliella afzelii (strain PKo) (Borrelia afzelii).